Reading from the N-terminus, the 342-residue chain is Outer spore wall protein RRT8 (342 aa).

Topologically, residues 1–109 (MKAGIELISH…VLTNPVYWKH (109 aa)) are cytoplasmic. Residues 110-130 (ILLFAVCYALIFVTIAGLFYV) traverse the membrane as a helical segment. Residue threonine 131 is a topological domain, extracellular. A helical membrane pass occupies residues 132-152 (LVPLLVTWAILLLGPLGVILV). Residues 153 to 240 (HIQWILQTNV…PRLLFRMFFK (88 aa)) lie on the Cytoplasmic side of the membrane. The chain crosses the membrane as a helical span at residues 241–261 (VSNFTSLTLLSLIPIVGPILA). At 262–299 (NQLMAPKRTFTYLQRYFLLKGFSKKQAKDFQYEHYASF) the chain is on the extracellular side. Residues 300 to 320 (ICFGMSAGLLELIPFFTIVTI) form a helical membrane-spanning segment. Residues 321–342 (SSNTVGAAKWCTSLLKGERKKE) lie on the Cytoplasmic side of the membrane.

The protein belongs to the LDS family.

Its subcellular location is the prospore membrane. The protein resides in the lipid droplet. It is found in the spore wall. In terms of biological role, involved in spore wall assembly. May be involved in the modulation of rDNA transcription. The sequence is that of Outer spore wall protein RRT8 from Saccharomyces cerevisiae (strain ATCC 204508 / S288c) (Baker's yeast).